The following is a 334-amino-acid chain: Cytoskeleton protein RodZ (334 aa).

Over 1 to 111 (MNTEATHDQN…LGKRRKKRDG (111 aa)) the chain is Cytoplasmic. In terms of domain architecture, HTH cro/C1-type spans 19–71 (LRNAREQLGLSQQAVAERLCLKVSTVRDIEEDKAPSDLASTFLRGYIRSYARL). Positions 30 to 49 (QQAVAERLCLKVSTVRDIEE) form a DNA-binding region, H-T-H motif. The chain crosses the membrane as a helical; Signal-anchor for type II membrane protein span at residues 112–132 (WLMSFTWLVLFVVVGLTGAWW). Residues 133 to 334 (WQNHKAHQEE…TLNAEPTPAQ (202 aa)) are Periplasmic-facing. Residues 152–210 (AGLNADKDSGQSVPLDTGAVTSQDTTPAQTAPAPATPVDSTAATQTPAPTAAATQNTVV) form a disordered region. Residues 161–175 (GQSVPLDTGAVTSQD) are compositionally biased toward polar residues. The segment covering 176–210 (TTPAQTAPAPATPVDSTAATQTPAPTAAATQNTVV) has biased composition (low complexity).

It belongs to the RodZ family.

It localises to the cell inner membrane. Its function is as follows. Cytoskeletal protein that is involved in cell-shape control through regulation of the length of the long axis. The polypeptide is Cytoskeleton protein RodZ (Salmonella gallinarum (strain 287/91 / NCTC 13346)).